Here is a 156-residue protein sequence, read N- to C-terminus: SsrA-binding protein (156 aa).

This sequence belongs to the SmpB family.

Its subcellular location is the cytoplasm. Functionally, required for rescue of stalled ribosomes mediated by trans-translation. Binds to transfer-messenger RNA (tmRNA), required for stable association of tmRNA with ribosomes. tmRNA and SmpB together mimic tRNA shape, replacing the anticodon stem-loop with SmpB. tmRNA is encoded by the ssrA gene; the 2 termini fold to resemble tRNA(Ala) and it encodes a 'tag peptide', a short internal open reading frame. During trans-translation Ala-aminoacylated tmRNA acts like a tRNA, entering the A-site of stalled ribosomes, displacing the stalled mRNA. The ribosome then switches to translate the ORF on the tmRNA; the nascent peptide is terminated with the 'tag peptide' encoded by the tmRNA and targeted for degradation. The ribosome is freed to recommence translation, which seems to be the essential function of trans-translation. This Renibacterium salmoninarum (strain ATCC 33209 / DSM 20767 / JCM 11484 / NBRC 15589 / NCIMB 2235) protein is SsrA-binding protein.